A 123-amino-acid polypeptide reads, in one-letter code: Glucose starvation-inducible protein B (123 aa).

Basic and acidic residues-rich tracts occupy residues 1-29 and 41-109; these read MADNNKMSREEAGRKGGETTSKNHDKEFY and SKNH…KEFY. Residues 1–123 are disordered; it reads MADNNKMSRE…SKGGNARNND (123 aa). 5 consecutive repeat copies span residues 13–32, 33–52, 53–72, 73–92, and 93–112. Residues 13 to 120 are 5 X 20 AA approximate tandem repeats; the sequence is GRKGGETTSK…EIGSKGGNAR (108 aa).

Involved in an adaptive response to nutrient deprivation other than sporulation. This chain is Glucose starvation-inducible protein B (gsiB), found in Bacillus subtilis (strain 168).